The chain runs to 246 residues: UDP-N-acetyl-D-mannosaminuronic acid transferase (246 aa).

This sequence belongs to the glycosyltransferase 26 family.

It carries out the reaction UDP-N-acetyl-alpha-D-mannosaminouronate + N-acetyl-alpha-D-glucosaminyl-di-trans,octa-cis-undecaprenyl diphosphate = beta-D-ManNAcA-(1-&gt;4)-alpha-D-GlcNAc-di-trans,octa-cis-undecaprenyl diphosphate + UDP + H(+). It participates in bacterial outer membrane biogenesis; enterobacterial common antigen biosynthesis. Catalyzes the synthesis of Und-PP-GlcNAc-ManNAcA (Lipid II), the second lipid-linked intermediate involved in enterobacterial common antigen (ECA) synthesis. This Citrobacter koseri (strain ATCC BAA-895 / CDC 4225-83 / SGSC4696) protein is UDP-N-acetyl-D-mannosaminuronic acid transferase.